A 410-amino-acid polypeptide reads, in one-letter code: Structure-specific endonuclease subunit SLX1 homolog (410 aa).

A GIY-YIG domain is found at 6–89 (QLHYCYFLLS…NICKVTRDNI (84 aa)).

This sequence belongs to the SLX1 family. Forms a heterodimer with a member of the SLX4 family. Requires a divalent metal cation as cofactor.

It localises to the nucleus. Functionally, catalytic subunit of a heterodimeric structure-specific endonuclease that resolves DNA secondary structures generated during DNA repair and recombination. Has endonuclease activity towards branched DNA substrates, introducing single-strand cuts in duplex DNA close to junctions with ss-DNA. The protein is Structure-specific endonuclease subunit SLX1 homolog of Cryptosporidium parvum (strain Iowa II).